A 161-amino-acid polypeptide reads, in one-letter code: Putative 4-hydroxy-4-methyl-2-oxoglutarate aldolase (161 aa).

Residues 75–78 and Arg-97 each bind substrate; that span reads GDML. Asp-98 serves as a coordination point for a divalent metal cation.

The protein belongs to the class II aldolase/RraA-like family. Homotrimer. Requires a divalent metal cation as cofactor.

It catalyses the reaction 4-hydroxy-4-methyl-2-oxoglutarate = 2 pyruvate. The catalysed reaction is oxaloacetate + H(+) = pyruvate + CO2. Catalyzes the aldol cleavage of 4-hydroxy-4-methyl-2-oxoglutarate (HMG) into 2 molecules of pyruvate. Also contains a secondary oxaloacetate (OAA) decarboxylase activity due to the common pyruvate enolate transition state formed following C-C bond cleavage in the retro-aldol and decarboxylation reactions. This chain is Putative 4-hydroxy-4-methyl-2-oxoglutarate aldolase, found in Marinomonas sp. (strain MWYL1).